Here is a 222-residue protein sequence, read N- to C-terminus: Deoxyribose-phosphate aldolase (222 aa).

Residue Asp89 is the Proton donor/acceptor of the active site. The Schiff-base intermediate with acetaldehyde role is filled by Lys152. The active-site Proton donor/acceptor is the Lys181.

It belongs to the DeoC/FbaB aldolase family. DeoC type 1 subfamily.

It localises to the cytoplasm. The enzyme catalyses 2-deoxy-D-ribose 5-phosphate = D-glyceraldehyde 3-phosphate + acetaldehyde. Its pathway is carbohydrate degradation; 2-deoxy-D-ribose 1-phosphate degradation; D-glyceraldehyde 3-phosphate and acetaldehyde from 2-deoxy-alpha-D-ribose 1-phosphate: step 2/2. Functionally, catalyzes a reversible aldol reaction between acetaldehyde and D-glyceraldehyde 3-phosphate to generate 2-deoxy-D-ribose 5-phosphate. The protein is Deoxyribose-phosphate aldolase of Alkaliphilus oremlandii (strain OhILAs) (Clostridium oremlandii (strain OhILAs)).